A 169-amino-acid chain; its full sequence is EP300-interacting inhibitor of differentiation 1 (169 aa).

The tract at residues 31 to 50 (GRGARGPAPEEGPMEEEAGP) is disordered. Positions 54-120 (RAQRGLFPEA…AGDALDGGFQ (67 aa)) are interaction with NR0B2. Positions 150 to 154 (LGCDE) match the LXCXE motif motif.

Interacts via its LXCXE motif with the entire pocket region of RB1. Interacts with EP300, NR0B2 and TRIM27. Expressed in all adult tissues examined and during embryogenesis.

Its subcellular location is the nucleus. It is found in the cytoplasm. Interacts with RB1 and EP300 and acts as a repressor of MYOD1 transactivation. Inhibits EP300 and CBP histone acetyltransferase activity. May be involved in coupling cell cycle exit to the transcriptional activation of genes required for cellular differentiation. May act as a candidate coinhibitory factor for NR0B2 that can be directly linked to transcription inhibitory mechanisms. The chain is EP300-interacting inhibitor of differentiation 1 from Mus musculus (Mouse).